Here is a 90-residue protein sequence, read N- to C-terminus: Cell division topological specificity factor (90 aa).

The interval 1 to 21 is disordered; it reads MAGFWSKLFSSEEKPSSAQTA. The segment covering 10–21 has biased composition (basic and acidic residues); the sequence is SSEEKPSSAQTA.

It belongs to the MinE family.

Prevents the cell division inhibition by proteins MinC and MinD at internal division sites while permitting inhibition at polar sites. This ensures cell division at the proper site by restricting the formation of a division septum at the midpoint of the long axis of the cell. This chain is Cell division topological specificity factor, found in Acinetobacter baumannii (strain AB307-0294).